The following is a 1107-amino-acid chain: Ubiquitin-associated protein 2-like (1107 aa).

At M1 the chain carries N-acetylmethionine. The tract at residues 1 to 33 is disordered; the sequence is MMTSVGTNRARGNWEQPQNQNQTQHKQRPQATA. Residues 49 to 89 form the UBA domain; it reads DFEEKVKQLIDITGKNQDECVIALHDCNGDVNRAINVLLEG. Residues 92–229 form a disordered region; it reads DTHSWEMVGK…NTWNNTGHFE (138 aa). Positions 118 to 132 are enriched in basic and acidic residues; it reads EEGKENRDRDRDYSR. Over residues 133–145 the composition is skewed to basic residues; it reads RRGGPPRRGRGAS. 2 positions are modified to asymmetric dimethylarginine: R187 and R190. Over residues 213-226 the composition is skewed to low complexity; it reads NYGNSSGNTWNNTG. Phosphoserine occurs at positions 376, 380, and 436. Phosphothreonine is present on T445. Disordered stretches follow at residues 461–513, 550–676, and 689–814; these read AVAT…KKTS, SDYE…IPSL, and ANQH…LPPG. Phosphoserine is present on residues S474, S487, S490, S491, and S497. Low complexity-rich tracts occupy residues 494–505 and 554–589; these read QSSSPQPAQQKL and STPT…SQES. Polar residues predominate over residues 590-656; the sequence is GYQSGPIQST…TQLQTTQSVE (67 aa). A phosphoserine mark is found at S624, S625, S628, and S629. A compositionally biased stretch (low complexity) spans 665–675; it reads SESPSTSSIPS. Positions 689–713 are enriched in polar residues; it reads ANQHSSSLSGLSHTEEIPNTTTTQH. The segment covering 714–804 has biased composition (low complexity); it reads SSALSTQQNT…STRSSVATTS (91 aa). Phosphoserine occurs at positions 872 and 879. 2 disordered regions span residues 885-921 and 1060-1107; these read FGRG…LNPA and QQPH…WGAN. 2 stretches are compositionally biased toward low complexity: residues 893–916 and 1073–1087; these read PAPA…TQQT and QDGQ…QTSS. Polar residues predominate over residues 1088-1107; the sequence is IPQKPQTNKSAYNSYSWGAN.

Interacts with BMI1. Part of a complex consisting of UBAP2L, BMI1 and RNF2. Interacts with G3BP1 (via NTF2 domain); promoting stress granule formation.

The protein resides in the nucleus. It localises to the chromosome. Its subcellular location is the cytoplasm. The protein localises to the stress granule. Functionally, recruits the ubiquitination machinery to RNA polymerase II for polyubiquitination, removal and degradation, when the transcription-coupled nucleotide excision repair (TC-NER) machinery fails to resolve DNA damage. Plays an important role in the activity of long-term repopulating hematopoietic stem cells (LT-HSCs). Is a regulator of stress granule assembly, required for their efficient formation. Required for proper brain development and neocortex lamination. This Mus musculus (Mouse) protein is Ubiquitin-associated protein 2-like.